A 335-amino-acid polypeptide reads, in one-letter code: UPF0353 protein MMAR_2288 (335 aa).

The next 2 helical transmembrane spans lie at 18 to 38 (WFFLFIFVIAGLIAVYVVLQL) and 67 to 87 (IPAMLLALSLVLFTVAMAGPT). Residues 98-294 (VVMLVIDVSQ…AELNSVYASL (197 aa)) enclose the VWFA domain. A helical membrane pass occupies residues 309–329 (MGWLRLGALVLVAAALAALLI).

This sequence belongs to the UPF0353 family.

It is found in the cell membrane. The protein is UPF0353 protein MMAR_2288 of Mycobacterium marinum (strain ATCC BAA-535 / M).